Reading from the N-terminus, the 328-residue chain is GTP 3',8-cyclase (328 aa).

The region spanning glycine 9–alanine 229 is the Radical SAM core domain. Arginine 18 contributes to the GTP binding site. [4Fe-4S] cluster contacts are provided by cysteine 25 and cysteine 29. S-adenosyl-L-methionine is bound at residue tyrosine 31. Cysteine 32 provides a ligand contact to [4Fe-4S] cluster. Arginine 60 lines the GTP pocket. Glycine 64 lines the S-adenosyl-L-methionine pocket. Threonine 94 provides a ligand contact to GTP. Serine 118 is a binding site for S-adenosyl-L-methionine. Lysine 154 contributes to the GTP binding site. Position 188 (methionine 188) interacts with S-adenosyl-L-methionine. The [4Fe-4S] cluster site is built by cysteine 252 and cysteine 255. Position 257–259 (arginine 257–arginine 259) interacts with GTP. A [4Fe-4S] cluster-binding site is contributed by cysteine 269.

The protein belongs to the radical SAM superfamily. MoaA family. In terms of assembly, monomer and homodimer. [4Fe-4S] cluster is required as a cofactor.

The catalysed reaction is GTP + AH2 + S-adenosyl-L-methionine = (8S)-3',8-cyclo-7,8-dihydroguanosine 5'-triphosphate + 5'-deoxyadenosine + L-methionine + A + H(+). The protein operates within cofactor biosynthesis; molybdopterin biosynthesis. Catalyzes the cyclization of GTP to (8S)-3',8-cyclo-7,8-dihydroguanosine 5'-triphosphate. The polypeptide is GTP 3',8-cyclase (Rhodobacter capsulatus (Rhodopseudomonas capsulata)).